Here is a 276-residue protein sequence, read N- to C-terminus: Pantothenate synthetase (276 aa).

Residue M27–H34 participates in ATP binding. Residue H34 is the Proton donor of the active site. Residue Q58 coordinates (R)-pantoate. Beta-alanine is bound at residue Q58. Position 147-150 (G147–D150) interacts with ATP. Q153 is a binding site for (R)-pantoate. ATP contacts are provided by residues A176 and L184–R187.

It belongs to the pantothenate synthetase family. As to quaternary structure, homodimer.

The protein localises to the cytoplasm. The catalysed reaction is (R)-pantoate + beta-alanine + ATP = (R)-pantothenate + AMP + diphosphate + H(+). It functions in the pathway cofactor biosynthesis; (R)-pantothenate biosynthesis; (R)-pantothenate from (R)-pantoate and beta-alanine: step 1/1. Its function is as follows. Catalyzes the condensation of pantoate with beta-alanine in an ATP-dependent reaction via a pantoyl-adenylate intermediate. This Helicobacter pylori (strain P12) protein is Pantothenate synthetase.